The sequence spans 59 residues: Large ribosomal subunit protein uL30 (59 aa).

The protein belongs to the universal ribosomal protein uL30 family. Part of the 50S ribosomal subunit.

The chain is Large ribosomal subunit protein uL30 from Ruminiclostridium cellulolyticum (strain ATCC 35319 / DSM 5812 / JCM 6584 / H10) (Clostridium cellulolyticum).